A 387-amino-acid chain; its full sequence is tRNA-specific 2-thiouridylase MnmA (387 aa).

Residues 34 to 41 (AMSGGVDS) and M60 each bind ATP. C127 serves as the catalytic Nucleophile. The cysteines at positions 127 and 223 are disulfide-linked. G151 contributes to the ATP binding site. Positions 173–175 (KDQ) are interaction with tRNA. C223 acts as the Cysteine persulfide intermediate in catalysis.

It belongs to the MnmA/TRMU family.

The protein resides in the cytoplasm. The enzyme catalyses S-sulfanyl-L-cysteinyl-[protein] + uridine(34) in tRNA + AH2 + ATP = 2-thiouridine(34) in tRNA + L-cysteinyl-[protein] + A + AMP + diphosphate + H(+). Functionally, catalyzes the 2-thiolation of uridine at the wobble position (U34) of tRNA, leading to the formation of s(2)U34. The sequence is that of tRNA-specific 2-thiouridylase MnmA from Anaplasma marginale (strain St. Maries).